The primary structure comprises 336 residues: uncharacterized protein (336 aa).

The first 21 residues, 1–21 (MSELVLITGITGFVASHSAEA), serve as a signal peptide directing secretion. Lys-38 contributes to the NADP(+) binding site. Position 153 is a phosphothreonine (Thr-153). Residue Tyr-167 coordinates NADP(+).

Belongs to the NAD(P)-dependent epimerase/dehydratase family. Dihydroflavonol-4-reductase subfamily.

This is an uncharacterized protein from Schizosaccharomyces pombe (strain 972 / ATCC 24843) (Fission yeast).